The following is a 350-amino-acid chain: Cyclin-O (350 aa).

The tract at residues 1-89 (MVTPCPTSPS…GSPLPGPAQP (89 aa)) is disordered. Basic residues predominate over residues 28–42 (PVKKSRRPRLRRKQP). Serine 81 carries the post-translational modification Phosphoserine.

It belongs to the cyclin family. As to expression, present in respiratory cells (at protein level).

The protein localises to the cytoplasm. Its subcellular location is the nucleus. It localises to the nucleolus. Specifically required for generation of multiciliated cells, possibly by promoting a cell cycle state compatible with centriole amplification and maturation. Acts downstream of MCIDAS to promote mother centriole amplification and maturation in preparation for apical docking. In Homo sapiens (Human), this protein is Cyclin-O.